A 421-amino-acid polypeptide reads, in one-letter code: Prenyltransferase asqH2 (421 aa).

The interval 1 to 28 is disordered; the sequence is MDRNSFTAYGPATGAITESGEQENDHTK. Position 105 (Glu-105) interacts with L-tryptophan. Positions 119, 272, 274, 276, and 341 each coordinate substrate.

It belongs to the tryptophan dimethylallyltransferase family.

The enzyme catalyses yaequinolone E + dimethylallyl diphosphate + H2O = [(1'E)-3'-hydroxy-3',7'-dimethylocta-1',6'-dien-1'-yl]-quinolinone B + diphosphate. It participates in secondary metabolite biosynthesis. The protein operates within alkaloid biosynthesis. It functions in the pathway mycotoxin biosynthesis. Its function is as follows. Prenyltransferase; part of the gene cluster that mediates the biosynthesis of the aspoquinolone mycotoxins. Within the pathway, the prenyltransferase asqH2 performs the second alkylation with DMAPP at delta(3') double bond to yield a carbenium ion intermediate, which can be attacked by H(2)O to yield a styrenyl quinolone containing a C3'-hydroxyprenyl chain. The first step of the pathway is catalyzed by the nonribosomal peptide synthetase asqK that condenses anthranilic acid and O-methyl-L-tyrosine to produce 4'-methoxycyclopeptin. 4'-methoxycyclopeptin is then converted to 4'-methoxydehydrocyclopeptin by the ketoglutarate-dependent dioxygenase asqJ. AsqJ also converts its first product 4'-methoxydehydrocyclopeptin to 4'-methoxycyclopenin. The following conversion of 4'-methoxycyclopenin into 4'-methoxyviridicatin is catalyzed by the cyclopenase asqI. 4'-methoxyviridicatin is the precursor of quinolone natural products, and is further converted to quinolinone B. The prenyltransferase asqH1 then catalyzes the canonical Friedel-Crafts alkylation of quinolinone B with dimethylallyl cation to yield dimethylallyl quinolone, which is subjected to FAD-dependent dehydrogenation by the FAD-linked oxidoreductase asqF to yield conjugated aryl diene. The delta(3') double bond then serves as the site of the second alkylation with DMAPP catalyzed by the prenyltransferase asqH2 to yield a carbenium ion intermediate, which can be attacked by H(2)O to yield a styrenyl quinolone containing a C3'-hydroxyprenyl chain. The FAD-dependent monooxygenase asqG performs epoxidation of the terminal C7'-C8' olefin. Finally, after dehydratation of the epoxide at C3 by asqC, the quinolone epoxide rearrangement protein asqO catalyzes an enzymatic 3-exo-tet cyclization to yield the cyclopropyl-THF ring system in aspoquinolone. The sequence is that of Prenyltransferase asqH2 from Emericella nidulans (strain FGSC A4 / ATCC 38163 / CBS 112.46 / NRRL 194 / M139) (Aspergillus nidulans).